A 264-amino-acid polypeptide reads, in one-letter code: DNA-binding HTH-type transcriptional repressor TrmBL2 (264 aa).

Positions 81 to 113 (LEKFIEEWQERVKEELEAKKKAKEELIELMKPL) form a coiled coil.

This sequence belongs to the transcriptional regulator TrmB family.

The protein localises to the cytoplasm. It is found in the chromosome. Its function is as follows. An abundant chromosomal protein that seems to be involved in both genome architecture and transcription repression. Incubation with DNA in vitro gives fibrous structures 14.2 +/- 2.1 nm in thickness (naked DNA is 1.83 +/- 0.37 nm); does not significantly compact DNA. Binds to both coding and non-coding regions; binding within gene promoters correlates with decreased transcript levels, while binding within coding regions does not. The polypeptide is DNA-binding HTH-type transcriptional repressor TrmBL2 (Thermococcus kodakarensis (strain ATCC BAA-918 / JCM 12380 / KOD1) (Pyrococcus kodakaraensis (strain KOD1))).